The sequence spans 733 residues: MNEERKCPITGATHKPSAEKGRSNHDWWPNQLNLKILHQHSALSNPMDKDFNYAEEFKKLDLAAIKQDLYALMTDSQEWWPADYGHYGPLFIRMAWHSAGTYRTSDGRGGAGTGSQRFAPLNSWPDNANLDKARRLLWPIKQKYGRQISWADLMILTGNCALESMGLKTFGFAGGREDIWEPEEDIYWGTEGEWLADKRYSGERELEKPLAAVQMGLIYVNPEGPNGKPDPLAAAKDIRETFARMAMNDEETVALIAGGHTFGKTHGAGDASQVGPEPEAAGIEEQGLGWKNQYGTGKGKDTITSGLEVIWTTTPTKWSNNFFWNLFGYEWELTKSPAGAYQWTPKYGVGANTVPDAHDPSKRHAPAMMTTDLALRFDPDYEKIARRYYENPDQFADAFARAWFKLTHRDMGPRSRYRGAEVPVEELIWQDTIPALDHELIGADEIAALKATILASELSIAQLISTAWASAATFRNSDKRGGANGARLRLAPQKDWEVNQPDELQKVLQVLETIQTEFNASRNDGKKVSLADLIVLGGCAAIEAAAEKAGYKVTVPFTPGRMDATQEETDAHSFAVLEPVADGFRNYLKAKYSFSVEEMLIDKAQLLTLTAPEMTVLIGGMRVLNTNAGHTTHGVFTKRPETLSNDFFVNLLDMGTVWKATSEASDIFEGRNRSTGELQWTATRVDLVFGSNSQLRALVEVYGCKDSQEKFLNDFIAAWNKVMNLDRFDLSGL.

The tract at residues 1–25 is disordered; that stretch reads MNEERKCPITGATHKPSAEKGRSNH. The segment covering 16-25 has biased composition (basic and acidic residues); it reads PSAEKGRSNH. Residues 96–219 constitute a cross-link (tryptophyl-tyrosyl-methioninium (Trp-Tyr) (with M-245)); sequence WHSAGTYRTS…LAAVQMGLIY (124 aa). H97 (proton acceptor) is an active-site residue. Positions 219–245 form a cross-link, tryptophyl-tyrosyl-methioninium (Tyr-Met) (with W-96); it reads YVNPEGPNGKPDPLAAAKDIRETFARM. A heme b-binding site is contributed by H260.

The protein belongs to the peroxidase family. Peroxidase/catalase subfamily. Homodimer or homotetramer. Heme b serves as cofactor. Formation of the three residue Trp-Tyr-Met cross-link is important for the catalase, but not the peroxidase activity of the enzyme.

The catalysed reaction is H2O2 + AH2 = A + 2 H2O. The enzyme catalyses 2 H2O2 = O2 + 2 H2O. Its function is as follows. Bifunctional enzyme with both catalase and broad-spectrum peroxidase activity. The chain is Catalase-peroxidase from Chlorobium chlorochromatii (strain CaD3).